Consider the following 416-residue polypeptide: Enterobactin exporter EntS (416 aa).

The Cytoplasmic segment spans residues 1 to 21; the sequence is MNKQSWLLNLSLLKTHPAFRA. A helical membrane pass occupies residues 22 to 42; it reads VFLARFISIVSLGLLGVAVPV. At 43–55 the chain is on the periplasmic side; sequence QIQMMTHSTWQVG. A helical transmembrane segment spans residues 56-76; the sequence is LSVTLTGGAMFVGLMVGGVLA. Residues 77-83 are Cytoplasmic-facing; that stretch reads DRYERKK. A helical transmembrane segment spans residues 84-104; it reads VILLARGTCGIGFIGLCLNAL. Residues 105–109 are Periplasmic-facing; sequence LPEPS. The chain crosses the membrane as a helical span at residues 110-130; that stretch reads LLAIYLLGLWDGFFASLGVTA. Residues 131–156 are Cytoplasmic-facing; the sequence is LLAATPALVGRENLMQAGAITMLTVR. Residues 157–177 form a helical membrane-spanning segment; the sequence is LGSVISPMIGGLLLATGGVAW. Asn178 is a topological domain (periplasmic). Residues 179–199 form a helical membrane-spanning segment; that stretch reads YGLAAAGTFITLLPLLSLPAL. Topologically, residues 200–218 are cytoplasmic; the sequence is PPPPQPREHPLKSLLAGFR. The chain crosses the membrane as a helical span at residues 219-239; that stretch reads FLLASPLVGGIALLGGLLTMA. The Periplasmic segment spans residues 240–256; it reads SAVRVLYPALADNWQMS. Residues 257 to 277 form a helical membrane-spanning segment; sequence AAQIGFLYAAIPLGAAIGALT. Topologically, residues 278 to 287 are cytoplasmic; it reads SGKLAHSVRP. A helical membrane pass occupies residues 288 to 307; it reads GLLMLLSTLGAFLAISLFGL. Over 308–313 the chain is Periplasmic; sequence MPMWIL. Residues 314 to 336 traverse the membrane as a helical segment; the sequence is GVVCLALFGWLSAVSSLLQYTML. Over 337 to 356 the chain is Cytoplasmic; sequence QTQTPEAMLGRINGLWTAQN. Residues 357-377 form a helical membrane-spanning segment; it reads VTGDAIGAALLGGLGAMMTPV. Residue Ala378 is a topological domain, periplasmic. A helical membrane pass occupies residues 379 to 399; the sequence is SASASGFGLLIIGVLLLLVLV. Topologically, residues 400–416 are cytoplasmic; sequence ELRRFRQTPPQVTASDS.

The protein belongs to the major facilitator superfamily. EntS (TC 2.A.1.38) family.

The protein localises to the cell inner membrane. Its function is as follows. Component of an export pathway for enterobactin. The chain is Enterobactin exporter EntS from Escherichia coli O45:K1 (strain S88 / ExPEC).